Here is a 1096-residue protein sequence, read N- to C-terminus: Centrosome-associated zinc finger protein Cp190 (1096 aa).

Positions 1–209 are involved in microtubule and centrosome binding; the sequence is MGEVKSVKVD…GDSSNVKQEP (209 aa). One can recognise a BTB domain in the interval 30 to 97; that stretch reads CDLTLQFRDN…MYTGTLEFEL (68 aa). Residues 126–308 are disordered; sequence MENVNRQQRP…PQGTQTQLEH (183 aa). Composition is skewed to polar residues over residues 175 to 213 and 220 to 230; these read RANT…TSPF and YNNNKRPAQTS. 2 positions are modified to phosphoserine: S197 and S211. The segment at 207-271 is nuclear localization; it reads QEPTSPFEQL…GDNDPEYDGG (65 aa). The interval 210 to 245 is involved in interaction with cliff; sequence TSPFEQLRKGYNNNKRPAQTSLLSPPSKKPSLEEVK. T229 carries the phosphothreonine modification. S233 carries the post-translational modification Phosphoserine. Positions 239–252 are enriched in basic and acidic residues; sequence PSLEEVKEFAEQQR. The segment at 245 to 468 is centrosomal targeting M domain involved in interaction with ZIPIC; the sequence is KEFAEQQRMR…IAQGAENTTG (224 aa). Low complexity predominate over residues 292-305; that stretch reads STSKQQSPQGTQTQ. Phosphoserine is present on residues S298 and S319. Positions 309–390 are involved in interaction with cliff; it reads GSTTIILKQD…KPPANQSSAT (82 aa). The interval 366–449 is disordered; that stretch reads NTPAAPTEKS…ANTAAAQKRR (84 aa). Positions 385–508 are centrosomal localization and interaction with microtubules; it reads NQSSATTSPH…KETIDPALCE (124 aa). The segment covering 412 to 445 has biased composition (low complexity); it reads AQQKAASSQQKSGTSQTTGNQGTGANPPANTAAA. 2 C2H2-type zinc fingers span residues 538-561 and 567-590; these read AECA…NEVH and QQCI…KSYH. The residue at position 603 (T603) is a Phosphothreonine. Over residues 608-625 the composition is skewed to acidic residues; that stretch reads LGSQDEEEEAEGDEEQEP. A disordered region spans residues 608–630; sequence LGSQDEEEEAEGDEEQEPEQTGK. Phosphoserine is present on residues S610, S708, and S723. The segment at 710–733 is disordered; sequence PEAEHVKQETDEKSLAGTEEEYDD. Basic and acidic residues predominate over residues 711–723; it reads EAEHVKQETDEKS. T727 carries the post-translational modification Phosphothreonine. Phosphoserine occurs at positions 745, 748, 757, and 760. A disordered region spans residues 770–927; sequence LIAESEEQSN…EDSPIPHSDS (158 aa). Positions 777–799 are enriched in basic and acidic residues; it reads QSNKEPKSDKPRDDISEKLKELT. The segment covering 802–812 has biased composition (acidic residues); sequence WTEDENDDDVD. T817 carries the post-translational modification Phosphothreonine. Basic and acidic residues-rich tracts occupy residues 825 to 834, 849 to 861, 882 to 907, and 914 to 927; these read ANKDPEPTVH, KGPE…KASE, EKMD…KEAE, and EFIK…HSDS. 3 positions are modified to phosphoserine: S920, S925, and S927. T936 bears the Phosphothreonine mark. Position 938 is a phosphoserine (S938). Basic and acidic residues-rich tracts occupy residues 960–973 and 1011–1035; these read IAEA…KDIV and AAEK…EDKP. Residues 960-1096 form a disordered region; sequence IAEAEKPDQE…GVSAAAKEEL (137 aa). S1071 and S1074 each carry phosphoserine. The segment covering 1076–1086 has biased composition (acidic residues); that stretch reads WGDDDEDEDEN.

In terms of assembly, homodimerizes via the N-terminal BTB domain. Component of the gypsy chromatin insulator complex, composed of Cp190, mod(mdg4) and su(Hw). The gypsy chromatin insulator complex interacts with Topors via mod(mdg4) and su(Hw). Interacts with Cp60. Interacts with inv. Interacts with Nup98. Interacts (via BTB domain) with pita (via region between the ZAD domain and the first zinc finger domain); the interaction is direct. Interacts with ZIPIC (via region between the ZAD domain and the first zinc finger domain); the interaction is direct. Interacts (via regions between the BTB domain and first zinc finger domain) with cliff (via regions flanking MADF domain 1); the interaction is probably direct. Associates (via N-terminus) with microtubules; the interaction is direct, is enhanced by dimerization and involves multiple regions within the N-terminus. Microtubule association is enriched at growing plus ends. In terms of tissue distribution, expressed in spermatids but not in mature spermatozoa. Localizes within the spermatids to a sheath of microtubules around the nucleus and to microtubules within the tail.

Its subcellular location is the nucleus. It localises to the cytoplasm. The protein resides in the cytoskeleton. The protein localises to the microtubule organizing center. It is found in the centrosome. Its subcellular location is the chromosome. It localises to the nucleoplasm. Functionally, plays a central role in chromatin domain organization and boundary function through recruitment by a range of insulator DNA-binding proteins, including ZIPIC, pita, CTCF, su(Hw), cliff and others. Together with pita and CTCF cooperatively binds to and regulates the activity of the Miscadastral pigmentation (MCP) insulator. Cooperatively recruited to the front-ultraabdominal (Fub) boundary by pita, su(Hw) and cliff. Recruitment of Cp190 together with Chro/chromator induces chromatin decondensation. Component of the gypsy chromatin insulator complex which is required for the function of the gypsy chromatin insulator and other endogenous chromatin insulators. Chromatin insulators are regulatory elements that establish independent domains of transcriptional activity within eukaryotic genomes. Insulators have two defining properties; they can block the communication between an enhancer and a promoter when placed between them and can also buffer transgenes from position effect variegation (PEV). Insulators are proposed to structure the chromatin fiber into independent domains of differing transcriptional potential by promoting the formation of distinct chromatin loops to form topologically associating domains (TADs). This chromatin looping may involve the formation of insulator bodies, where homotypic interactions between individual subunits of the insulator complex could promote the clustering of widely spaced insulators at the nuclear periphery. Within the gypsy insulator complex, this protein may directly bind to insulator DNA at sites distinct from those recognized by su(Hw). Required during embryogenesis for axial expansion, an actin/myosin dependent process that distributes the dividing nuclei along the anterior-posterior axis of the syncytial embryo. Associates with centrosomes and interphase microtubules during mitosis, and recruits CP60; may have a role in maintaining centrosome and spindle integrity. In Drosophila melanogaster (Fruit fly), this protein is Centrosome-associated zinc finger protein Cp190.